The following is a 230-amino-acid chain: Ion-translocating oxidoreductase complex subunit E (230 aa).

The next 6 helical transmembrane spans lie at 18-38 (ALVQ…ATNA), 39-59 (LGLG…VSAL), 63-83 (TPAE…VSAV), 86-106 (LINA…PLIV), 125-145 (WLSA…MFVL), and 182-202 (PFLL…MLAV).

The protein belongs to the NqrDE/RnfAE family. In terms of assembly, the complex is composed of six subunits: RsxA, RsxB, RsxC, RsxD, RsxE and RsxG.

It is found in the cell inner membrane. In terms of biological role, part of a membrane-bound complex that couples electron transfer with translocation of ions across the membrane. Required to maintain the reduced state of SoxR. The chain is Ion-translocating oxidoreductase complex subunit E from Salmonella arizonae (strain ATCC BAA-731 / CDC346-86 / RSK2980).